Consider the following 110-residue polypeptide: uncharacterized protein (110 aa).

Disordered stretches follow at residues 1-41 (MEWG…ERAQ) and 65-110 (LRQL…ASES). The stretch at 38–68 (ERAQQLLDAVEQRQRQLLDTIAACEEMLRQL) forms a coiled coil.

This is an uncharacterized protein from Mus musculus (Mouse).